The following is a 200-amino-acid chain: Chromophore lyase CpcS/CpeS (200 aa).

The protein belongs to the CpcS/CpeS biliprotein lyase family.

In terms of biological role, covalently attaches a chromophore to Cys residue(s) of phycobiliproteins. This Synechococcus sp. (strain WH8020) protein is Chromophore lyase CpcS/CpeS.